Here is a 446-residue protein sequence, read N- to C-terminus: Elongation factor 1-alpha (446 aa).

The tr-type G domain maps to 5 to 230; it reads KNHLNLVVIG…DALDQPKRPK (226 aa). The G1 stretch occupies residues 14 to 21; sequence GHVDSGKS. 14 to 21 provides a ligand contact to GTP; it reads GHVDSGKS. Positions 70–74 are G2; that stretch reads GITID. The segment at 91-94 is G3; it reads DAPG. Residues 91–95 and 153–156 each bind GTP; these read DAPGH and NKMD. The G4 stretch occupies residues 153-156; sequence NKMD. Positions 194 to 196 are G5; that stretch reads SGW.

This sequence belongs to the TRAFAC class translation factor GTPase superfamily. Classic translation factor GTPase family. EF-Tu/EF-1A subfamily.

The protein resides in the cytoplasm. In terms of biological role, this protein promotes the GTP-dependent binding of aminoacyl-tRNA to the A-site of ribosomes during protein biosynthesis. The sequence is that of Elongation factor 1-alpha (EFAA) from Stylonychia lemnae (Ciliate).